We begin with the raw amino-acid sequence, 860 residues long: Leucine--tRNA ligase (860 aa).

A 'HIGH' region motif is present at residues 42 to 52 (PYPSGRLHMGH). Residues 619–623 (KMSKS) carry the 'KMSKS' region motif. Lys622 lines the ATP pocket.

Belongs to the class-I aminoacyl-tRNA synthetase family.

It is found in the cytoplasm. The catalysed reaction is tRNA(Leu) + L-leucine + ATP = L-leucyl-tRNA(Leu) + AMP + diphosphate. The sequence is that of Leucine--tRNA ligase from Escherichia coli O7:K1 (strain IAI39 / ExPEC).